The following is a 255-amino-acid chain: Superoxide dismutase [Fe] 2, chloroplastic (255 aa).

Residues M1 to R32 constitute a chloroplast transit peptide. Positions 67, 119, 203, and 207 each coordinate Fe cation.

This sequence belongs to the iron/manganese superoxide dismutase family. As to quaternary structure, homodimer. The cofactor is Fe cation. In terms of tissue distribution, strongly expressed in the stems of the young seedlings, etiolated seedlings and embryogenic calli, but only minimally expressed in the leaves and the roots.

Its subcellular location is the plastid. The protein resides in the chloroplast. It catalyses the reaction 2 superoxide + 2 H(+) = H2O2 + O2. Its function is as follows. Destroys superoxide anion radicals which are normally produced within the cells and which are toxic to biological systems. The sequence is that of Superoxide dismutase [Fe] 2, chloroplastic from Oryza sativa subsp. japonica (Rice).